Consider the following 308-residue polypeptide: Acetaldehyde dehydrogenase (308 aa).

NAD(+) is bound at residue Thr-25–Ile-28. Cys-139 functions as the Acyl-thioester intermediate in the catalytic mechanism. NAD(+) is bound at residue Asn-279.

Belongs to the acetaldehyde dehydrogenase family.

The catalysed reaction is acetaldehyde + NAD(+) + CoA = acetyl-CoA + NADH + H(+). The polypeptide is Acetaldehyde dehydrogenase (Streptomyces griseus subsp. griseus (strain JCM 4626 / CBS 651.72 / NBRC 13350 / KCC S-0626 / ISP 5235)).